A 390-amino-acid chain; its full sequence is tRNA-specific 2-thiouridylase MnmA (390 aa).

Residues 20–27 (AMSGGVDS) and L46 contribute to the ATP site. C114 serves as the catalytic Nucleophile. Cysteines 114 and 211 form a disulfide. G138 contacts ATP. The interval 161 to 163 (RDQ) is interaction with tRNA. C211 serves as the catalytic Cysteine persulfide intermediate.

The protein belongs to the MnmA/TRMU family.

It is found in the cytoplasm. The catalysed reaction is S-sulfanyl-L-cysteinyl-[protein] + uridine(34) in tRNA + AH2 + ATP = 2-thiouridine(34) in tRNA + L-cysteinyl-[protein] + A + AMP + diphosphate + H(+). In terms of biological role, catalyzes the 2-thiolation of uridine at the wobble position (U34) of tRNA, leading to the formation of s(2)U34. The polypeptide is tRNA-specific 2-thiouridylase MnmA (Azorhizobium caulinodans (strain ATCC 43989 / DSM 5975 / JCM 20966 / LMG 6465 / NBRC 14845 / NCIMB 13405 / ORS 571)).